Reading from the N-terminus, the 140-residue chain is Large-conductance mechanosensitive channel (140 aa).

2 helical membrane-spanning segments follow: residues 11-31 (FAMR…GAFG) and 82-102 (GNFI…FLLV).

The protein belongs to the MscL family. As to quaternary structure, homopentamer.

It is found in the cell inner membrane. Channel that opens in response to stretch forces in the membrane lipid bilayer. May participate in the regulation of osmotic pressure changes within the cell. This is Large-conductance mechanosensitive channel from Parabacteroides distasonis (strain ATCC 8503 / DSM 20701 / CIP 104284 / JCM 5825 / NCTC 11152).